Consider the following 613-residue polypeptide: Portal protein (613 aa).

The disordered stretch occupies residues 577-613; the sequence is ATGGDHGIRQAPSARGDAEPDHAKSKPARDPPPGAGS. A compositionally biased stretch (basic and acidic residues) spans 592 to 605; it reads GDAEPDHAKSKPAR.

Belongs to the herpesviridae portal protein family. Homododecamerizes. Interacts with terminase subunits TRM1 and TRM3.

The protein localises to the virion. Its subcellular location is the host nucleus. Functionally, forms a portal in the viral capsid through which viral DNA is translocated during DNA packaging. Assembles as a dodecamer at a single fivefold axe of the T=16 icosahedric capsid. Binds to the molecular motor that translocates the viral DNA, termed terminase. This Homo sapiens (Human) protein is Portal protein.